The sequence spans 170 residues: Probable calcium-binding protein CML27 (170 aa).

Alanine 2 bears the N-acetylalanine mark. EF-hand domains lie at 19–54 (ANPEELKKVFDQFDSNGDGKISVLELGGVFKAMGTS), 55–85 (YTETELNRVLEEVDTDRDGYINLDEFSTLCR), 88–123 (SSAAEIRDAFDLYDQDKNGLISASELHQVLNRLGMS), and 136–159 (VDADGDGNVNFEEFQKMMTSSSLL). Positions 32, 34, 36, 38, 43, 68, 70, 72, 74, 79, 101, 103, 105, 112, 137, 139, 141, 143, and 148 each coordinate Ca(2+).

Its function is as follows. Potential calcium sensor. This is Probable calcium-binding protein CML27 (CML27) from Arabidopsis thaliana (Mouse-ear cress).